Reading from the N-terminus, the 392-residue chain is S-adenosylmethionine synthase (392 aa).

H20 contributes to the ATP binding site. D22 provides a ligand contact to Mg(2+). K(+) is bound at residue E48. The L-methionine site is built by E61 and Q106. A flexible loop region spans residues Q106–K116. ATP-binding positions include D171–K173, D248, R254–K255, A271, and K275. Residue D248 coordinates L-methionine. K279 is a binding site for L-methionine.

It belongs to the AdoMet synthase family. In terms of assembly, homotetramer; dimer of dimers. It depends on Mg(2+) as a cofactor. Requires K(+) as cofactor.

It is found in the cytoplasm. The enzyme catalyses L-methionine + ATP + H2O = S-adenosyl-L-methionine + phosphate + diphosphate. The protein operates within amino-acid biosynthesis; S-adenosyl-L-methionine biosynthesis; S-adenosyl-L-methionine from L-methionine: step 1/1. Its function is as follows. Catalyzes the formation of S-adenosylmethionine (AdoMet) from methionine and ATP. The overall synthetic reaction is composed of two sequential steps, AdoMet formation and the subsequent tripolyphosphate hydrolysis which occurs prior to release of AdoMet from the enzyme. The sequence is that of S-adenosylmethionine synthase from Borreliella afzelii (strain PKo) (Borrelia afzelii).